Consider the following 324-residue polypeptide: Probable UDP-sugar transporter protein SLC35A4 (324 aa).

Over 1–18 the chain is Cytoplasmic; it reads MSVEDGGMPGLGRPRQAR. A helical membrane pass occupies residues 19–39; it reads WTLMLLLSTAMYGAHAPLLAL. Topologically, residues 40–52 are lumenal; sequence CHVDGRVPFRPSS. Residues 53–73 form a helical membrane-spanning segment; it reads AVLLTELTKLLLCAFSLLVGW. The Cytoplasmic portion of the chain corresponds to 74–85; it reads QAWPQGPPPWRQ. Residues 86–106 form a helical membrane-spanning segment; sequence AAPFALSALLYGANNNLVIYL. Residues 107–142 lie on the Lumenal side of the membrane; the sequence is QRYMDPSTYQVLSNLKIGSTAVLYCLCLRHRLSVRQ. The chain crosses the membrane as a helical span at residues 143–163; it reads GLALLLLMAAGACYAAGGLQV. Residues 164-180 are Cytoplasmic-facing; that stretch reads PGNTLPSPPPAAAASPM. A helical membrane pass occupies residues 181–201; it reads PLHITPLGLLLLILYCLISGL. Over 202 to 214 the chain is Lumenal; it reads SSVYTELLMKRQR. Residues 215–235 traverse the membrane as a helical segment; sequence LPLALQNLFLYTFGVLLNLGL. At 236–250 the chain is on the cytoplasmic side; the sequence is HAGGGSGPGLLEGFS. The helical transmembrane segment at 251–271 threads the bilayer; it reads GWAALVVLSQALNGLLMSAVM. The Lumenal portion of the chain corresponds to 272–275; sequence KHGS. Residues 276-298 form a helical membrane-spanning segment; that stretch reads SITRLFVVSCSLVVNAVLSAVLL. Topologically, residues 299 to 324 are cytoplasmic; the sequence is RLQLTAAFFLATLLIGLAMRLYYGSR.

The protein belongs to the nucleotide-sugar transporter family. SLC35A subfamily. Found in a complex with SLC35A2 and SLC35A3.

It is found in the golgi apparatus membrane. The enzyme catalyses CDP-L-ribitol(in) + CDP(out) = CDP-L-ribitol(out) + CDP(in). Mediates the transport of CDP-ribitol. Does not exhibit CMP-sialic acid, UDP-galactose and UDP-N-acetylglucosamine transport activity. The polypeptide is Probable UDP-sugar transporter protein SLC35A4 (Homo sapiens (Human)).